The following is a 292-amino-acid chain: 4-diphosphocytidyl-2-C-methyl-D-erythritol kinase (292 aa).

The active site involves Lys11. 95 to 105 provides a ligand contact to ATP; that stretch reads PVSAGLAGGSS. The active site involves Asp137.

This sequence belongs to the GHMP kinase family. IspE subfamily.

It catalyses the reaction 4-CDP-2-C-methyl-D-erythritol + ATP = 4-CDP-2-C-methyl-D-erythritol 2-phosphate + ADP + H(+). It functions in the pathway isoprenoid biosynthesis; isopentenyl diphosphate biosynthesis via DXP pathway; isopentenyl diphosphate from 1-deoxy-D-xylulose 5-phosphate: step 3/6. Its function is as follows. Catalyzes the phosphorylation of the position 2 hydroxy group of 4-diphosphocytidyl-2C-methyl-D-erythritol. This chain is 4-diphosphocytidyl-2-C-methyl-D-erythritol kinase, found in Alkaliphilus oremlandii (strain OhILAs) (Clostridium oremlandii (strain OhILAs)).